The chain runs to 549 residues: Chaperonin GroEL (549 aa).

ATP is bound by residues 30 to 33 (TLGP), lysine 51, 87 to 91 (DGTTT), glycine 415, 479 to 481 (NAA), and aspartate 495.

The protein belongs to the chaperonin (HSP60) family. As to quaternary structure, forms a cylinder of 14 subunits composed of two heptameric rings stacked back-to-back. Interacts with the co-chaperonin GroES.

It is found in the cytoplasm. The enzyme catalyses ATP + H2O + a folded polypeptide = ADP + phosphate + an unfolded polypeptide.. Together with its co-chaperonin GroES, plays an essential role in assisting protein folding. The GroEL-GroES system forms a nano-cage that allows encapsulation of the non-native substrate proteins and provides a physical environment optimized to promote and accelerate protein folding. The polypeptide is Chaperonin GroEL (Stenotrophomonas maltophilia (strain R551-3)).